A 438-amino-acid chain; its full sequence is Arginine deiminase-like protein (438 aa).

Belongs to the arginine deiminase family.

This is Arginine deiminase-like protein from Mycoplasma pneumoniae (strain ATCC 29342 / M129 / Subtype 1) (Mycoplasmoides pneumoniae).